Consider the following 87-residue polypeptide: U3-theraphotoxin-Hhn1a 18 (87 aa).

Positions Met-1 to Ala-24 are cleaved as a signal peptide. A propeptide spanning residues Ser-25 to Arg-52 is cleaved from the precursor. Intrachain disulfides connect Cys-54–Cys-67, Cys-61–Cys-72, and Cys-66–Cys-79.

Belongs to the neurotoxin 10 (Hwtx-1) family. 51 (Hntx-8) subfamily. Hntx-8 sub-subfamily. As to expression, expressed by the venom gland.

Its subcellular location is the secreted. In terms of biological role, ion channel inhibitor. The sequence is that of U3-theraphotoxin-Hhn1a 18 from Cyriopagopus hainanus (Chinese bird spider).